A 61-amino-acid polypeptide reads, in one-letter code: Large ribosomal subunit protein eL20 (61 aa).

The protein belongs to the eukaryotic ribosomal protein eL20 family. In terms of assembly, part of the 50S ribosomal subunit. Binds 23S rRNA.

The sequence is that of Large ribosomal subunit protein eL20 from Methanosarcina mazei (strain ATCC BAA-159 / DSM 3647 / Goe1 / Go1 / JCM 11833 / OCM 88) (Methanosarcina frisia).